The chain runs to 650 residues: Macrolide export ATP-binding/permease protein MacB (650 aa).

The region spanning 2-238 (IDIKGIRKSY…PTTAQEKRQE (237 aa)) is the ABC transporter domain. Residue 38 to 45 (GPSGSGKS) coordinates ATP. Helical transmembrane passes span 267–287 (GLSM…LALG), 531–551 (IAAI…LVSV), 580–600 (IVVS…FSLL), and 610–630 (VVSA…GIVF).

It belongs to the ABC transporter superfamily. Macrolide exporter (TC 3.A.1.122) family. Homodimer.

It is found in the cell inner membrane. Functionally, non-canonical ABC transporter that contains transmembrane domains (TMD), which form a pore in the inner membrane, and an ATP-binding domain (NBD), which is responsible for energy generation. Confers resistance against macrolides. The protein is Macrolide export ATP-binding/permease protein MacB of Bdellovibrio bacteriovorus (strain ATCC 15356 / DSM 50701 / NCIMB 9529 / HD100).